A 188-amino-acid chain; its full sequence is uncharacterized protein (188 aa).

Positions 1–23 are cleaved as a signal peptide; the sequence is MFKGQKTLAALAVSLLFTAPVYA. Cys42 and Cys81 are oxidised to a cystine.

The protein belongs to the fimbrial protein family.

It localises to the fimbrium. This is an uncharacterized protein from Escherichia coli (strain K12).